We begin with the raw amino-acid sequence, 209 residues long: Chromophore lyase CpcT/CpeT 1 (209 aa).

This sequence belongs to the CpcT/CpeT biliprotein lyase family.

Functionally, covalently attaches a chromophore to Cys residue(s) of phycobiliproteins. The protein is Chromophore lyase CpcT/CpeT 1 of Trichodesmium erythraeum (strain IMS101).